The sequence spans 1984 residues: Spermatogenesis-associated protein 31H1 (1984 aa).

Disordered regions lie at residues 448–467 (MGLT…TPGP), 1045–1067 (PMEE…QHSL), 1181–1287 (YRER…SDSK), 1326–1346 (RIGA…KPSQ), and 1439–1984 (QQPR…EATR). 3 stretches are compositionally biased toward polar residues: residues 450–463 (LTKS…SPGT), 1058–1067 (TRISESQHSL), and 1205–1226 (TQAS…QSPA). Over residues 1238 to 1247 (SRPDLVEKTK) the composition is skewed to basic and acidic residues. 2 stretches are compositionally biased toward polar residues: residues 1458-1471 (TDSQ…TASV) and 1492-1508 (RNET…TPGT). 2 stretches are compositionally biased toward basic and acidic residues: residues 1532–1558 (DKLT…ERTR) and 1568–1579 (SPSERSQRSSLE). 3 repeat units span residues 1593–1600 (PSRKNHSS), 1601–1608 (PSERSWRS), and 1609–1616 (PSQRNHCS). Residues 1593 to 1935 (PSRKNHSSPS…CSPSERSRRS (343 aa)) form a 27 X 8 AA approximate tandem repeat of P-S-E-R-S-H-H-S region. Residues 1599–1610 (SSPSERSWRSPS) are compositionally biased toward low complexity. Positions 1620-1630 (RSCHSLSERGL) are enriched in basic and acidic residues. Positions 1636–1647 (RSHRGPSQRRHH) are enriched in basic residues. A run of 3 repeats spans residues 1641-1648 (PSQRRHHS), 1649-1656 (PSERSHRS), and 1657-1664 (PSERSHRS). Residues 1648 to 1667 (SPSERSHRSPSERSHRSSSE) are compositionally biased toward basic and acidic residues. Basic residues predominate over residues 1668–1679 (RRHRSPSQRSHR). Over residues 1680–1691 (GPSERSHCSPSE) the composition is skewed to basic and acidic residues. 19 tandem repeats follow at residues 1681–1688 (PSERSHCS), 1689–1696 (PSERRHRS), 1697–1704 (PSQRSHRG), 1705–1712 (PSERRHHS), 1713–1720 (PSKRSHRS), 1721–1728 (PARRSHRS), 1729–1736 (PSERSHHS), 1737–1744 (PSERSHHS), 1745–1752 (PSERRHHS), 1753–1760 (PSERSHCS), 1761–1768 (PSERSHCS), 1769–1776 (PSERRHRS), 1777–1784 (PSERRHHS), 1785–1792 (PSEKSHHS), 1793–1800 (PSERSHHS), 1801–1808 (PSERRRHS), 1848–1855 (PSEKSHLS), 1864–1871 (PSERRGHS), and 1880–1887 (PSERSHRS). A compositionally biased stretch (basic residues) spans 1692–1727 (RRHRSPSQRSHRGPSERRHHSPSKRSHRSPARRSHR). Over residues 1728 to 1869 (SPSERSHHSP…SRCSPSERRG (142 aa)) the composition is skewed to basic and acidic residues. Basic and acidic residues-rich tracts occupy residues 1895 to 1917 (RTSE…EMRP), 1928 to 1941 (PSER…KEGL), and 1949 to 1959 (RPSHSLSRDFK). Tandem repeats lie at residues 1921–1928 (SGRNHCSP) and 1929–1935 (SERSRRS). The segment covering 1960-1969 (NQTTLLGTTH) has biased composition (polar residues).

In terms of tissue distribution, expressed in sperm (at protein level).

The chain is Spermatogenesis-associated protein 31H1 from Homo sapiens (Human).